The chain runs to 1254 residues: Receptor tyrosine-protein kinase erbB-2 (1254 aa).

Positions 1 to 22 (MELAAWCGWGLLLALLSPGASG) are cleaved as a signal peptide. The Extracellular portion of the chain corresponds to 23–652 (TQVCTGTDMK…PAEQRASPAT (630 aa)). Cys26 and Cys53 are joined by a disulfide. Residues Asn68, Asn125, and Asn187 are each glycosylated (N-linked (GlcNAc...) asparagine). 14 disulfides stabilise this stretch: Cys162-Cys192, Cys195-Cys204, Cys199-Cys212, Cys236-Cys244, Cys240-Cys252, Cys255-Cys264, Cys268-Cys295, Cys299-Cys311, Cys315-Cys331, Cys334-Cys338, Cys342-Cys367, Cys475-Cys504, Cys511-Cys520, and Cys515-Cys528. An N-linked (GlcNAc...) asparagine glycan is attached at Asn259. Residue Asn530 is glycosylated (N-linked (GlcNAc...) asparagine). Disulfide bonds link Cys531-Cys540, Cys544-Cys560, Cys563-Cys576, Cys567-Cys584, Cys587-Cys596, Cys600-Cys623, Cys626-Cys634, and Cys630-Cys642. A glycan (N-linked (GlcNAc...) asparagine) is linked at Asn571. Asn629 carries an N-linked (GlcNAc...) asparagine glycan. A helical membrane pass occupies residues 653 to 675 (SIIATVVGILLFLVIGVVVGILI). The segment at 676 to 689 (KRRRQKIRKYTMRR) is required for interaction with KPNB1 and EEA1. Positions 676–689 (KRRRQKIRKYTMRR) match the Nuclear localization signal motif. Residues 676–1254 (KRRRQKIRKY…PEYLGLDVPV (579 aa)) are Cytoplasmic-facing. One can recognise a Protein kinase domain in the interval 720 to 987 (LRKVKVLGSG…RMARDPQRFV (268 aa)). ATP contacts are provided by residues 726 to 734 (LGSGAFGTV) and Lys753. Residue Asp845 is the Proton acceptor of the active site. Phosphotyrosine is present on Tyr877. 2 disordered regions span residues 1029-1116 (GFFF…SEDP) and 1133-1179 (CSPQ…GKNG). Ser1054, Ser1078, Ser1083, and Ser1107 each carry phosphoserine. At Tyr1112 the chain carries Phosphotyrosine. The residue at position 1139 (Tyr1139) is a Phosphotyrosine; by autocatalysis. Residues 1146 to 1161 (RPQPPLTPEGPLPPVR) are compositionally biased toward pro residues. Phosphothreonine is present on Thr1166. The tract at residues 1195-1197 (EYL) is interaction with PIK3C2B. Tyr1196 is subject to Phosphotyrosine. Positions 1223–1254 (DQDPSERGSPPNTFEGTPTAENPEYLGLDVPV) are disordered. Residues 1232-1242 (PPNTFEGTPTA) are compositionally biased toward polar residues. Tyr1247 is modified (phosphotyrosine; by autocatalysis).

This sequence belongs to the protein kinase superfamily. Tyr protein kinase family. EGF receptor subfamily. In terms of assembly, homodimer. Heterodimer with EGFR, ERBB3 and ERBB4. Part of a complex with EGFR and either PIK3C2A or PIK3C2B. May interact with PIK3C2B when phosphorylated on Tyr-1196. Interacts with PRKCABP and PLXNB1. Interacts (when phosphorylated on Tyr-1247) with MEMO. Interacts with MUC1. Interacts (when phosphorylated on Tyr-1139) with GRB7 (via SH2 domain). Interacts (when phosphorylated on Tyr-1247) with ERBIN. Interacts with SRC, KPNB1, RANBP2, EEA1, CRM1, CLTC, PTK6, RPA194, MYOC and ACTB. Interacts (preferentially with the tyrosine phosphorylated form) with CPNE3; this interaction occurs at the cell membrane and is increased in a growth factor heregulin-dependent manner. Interacts with HSP90AA1 and HSP90AB1 in an ATP-dependent manner; the interaction suppresses ERBB2 kinase activity. Interacts with SORL1; this interaction regulates ERBB2 subcellular distribution by promoting its recycling after internalization from endosomes back to the plasma membrane, hence stimulates ERBB2-mediated signaling. Interacts with SH3BGRL. Interacts with ROR1. In terms of processing, autophosphorylated. Autophosphorylation occurs in trans, i.e. one subunit of the dimeric receptor phosphorylates tyrosine residues on the other subunit. Ligand-binding increases phosphorylation on tyrosine residues. Signaling via SEMA4C promotes phosphorylation at Tyr-1247. Dephosphorylated by PTPN12.

Its subcellular location is the cell membrane. It localises to the cell projection. The protein resides in the ruffle membrane. It is found in the early endosome. The protein localises to the cytoplasm. Its subcellular location is the perinuclear region. It localises to the nucleus. The catalysed reaction is L-tyrosyl-[protein] + ATP = O-phospho-L-tyrosyl-[protein] + ADP + H(+). Its function is as follows. Protein tyrosine kinase that is part of several cell surface receptor complexes, but that apparently needs a coreceptor for ligand binding. Essential component of a neuregulin-receptor complex, although neuregulins do not interact with it alone. GP30 is a potential ligand for this receptor. Regulates outgrowth and stabilization of peripheral microtubules (MTs). Upon ERBB2 activation, the MEMO1-RHOA-DIAPH1 signaling pathway elicits the phosphorylation and thus the inhibition of GSK3B at cell membrane. This prevents the phosphorylation of APC and CLASP2, allowing its association with the cell membrane. In turn, membrane-bound APC allows the localization of MACF1 to the cell membrane, which is required for microtubule capture and stabilization. In the nucleus is involved in transcriptional regulation. Associates with the 5'-TCAAATTC-3' sequence in the PTGS2/COX-2 promoter and activates its transcription. Implicated in transcriptional activation of CDKN1A; the function involves STAT3 and SRC. Involved in the transcription of rRNA genes by RNA Pol I and enhances protein synthesis and cell growth. This chain is Receptor tyrosine-protein kinase erbB-2 (ERBB2), found in Mesocricetus auratus (Golden hamster).